A 349-amino-acid chain; its full sequence is Core protein VP7 (349 aa).

Asn-287 is a glycosylation site (N-linked (GlcNAc...) asparagine; by host).

This sequence belongs to the orbivirus VP7 family. In terms of assembly, homotrimer that assemble in a complex of 260 capsomers on an inner scaffold composed of VP3.

The protein resides in the virion. The VP7 protein is one of the five proteins (with VP1, VP3, VP4, and VP6) which form the inner capsid of the virus. The chain is Core protein VP7 (Segment-7) from Antilocapra americana (Pronghorn).